A 481-amino-acid chain; its full sequence is RAC-alpha serine/threonine-protein kinase (481 aa).

The region spanning 5-108 (AIVKEGWLHK…WIQVIQHVAD (104 aa)) is the PH domain. The interval 120–141 (VRSGDSPSDNSGAEEMEVSHSK) is disordered. O-linked (GlcNAc) serine glycosylation is found at Ser127 and Ser130. Residues 151-409 (FEYLKLLGKG…AKEIMQHKFF (259 aa)) enclose the Protein kinase domain. Residues 157–165 (LGKGTFGKV) and Lys180 each bind ATP. Asp275 (proton acceptor) is an active-site residue. Thr306 carries an O-linked (GlcNAc) threonine glycan. Thr309 is subject to Phosphothreonine; by PDPK1. O-linked (GlcNAc) threonine glycosylation is present at Thr313. Positions 410–481 (AGIVWQDVYE…QFSYSASGNA (72 aa)) constitute an AGC-kinase C-terminal domain. The residue at position 474 (Ser474) is a Phosphoserine. Residue Ser474 is glycosylated (O-linked (GlcNAc) serine; alternate). Tyr475 bears the Phosphotyrosine mark.

This sequence belongs to the protein kinase superfamily. AGC Ser/Thr protein kinase family. RAC subfamily. In terms of processing, cleavage by caspase-3/CASP3. Cleaved at the caspase-3 consensus site Asp-463 during apoptosis, resulting in down-regulation of the AKT signaling pathway and decreased cell survival. Phosphorylation on Thr-309 and Ser-474 is required for full activity. Phosphorylation of the activation loop at Thr-309 by PDPK1/PDK1 is a prerequisite for full activation. Phosphorylation by mTORC2 at Ser-474 in response to growth factors plays a key role in AKT1 activation by facilitating subsequent phosphorylation of the activation loop by PDPK1/PDK1. As to expression, expressed in the oocyte.

It localises to the cytoplasm. The protein localises to the nucleus. The catalysed reaction is L-seryl-[protein] + ATP = O-phospho-L-seryl-[protein] + ADP + H(+). It catalyses the reaction L-threonyl-[protein] + ATP = O-phospho-L-threonyl-[protein] + ADP + H(+). Activated in response to insulin. Three specific sites, one in the kinase domain (Thr-309) and the two other ones in the C-terminal regulatory region (Ser-474 and Tyr-475), need to be phosphorylated for its full activation. AKT1 is one of several closely related serine/threonine-protein kinases known as the AKT kinase, and which regulate many processes including metabolism, proliferation, cell survival, growth and angiogenesis. This is mediated through serine and/or threonine phosphorylation of a range of downstream substrates. Over 100 substrate candidates have been reported so far, but for most of them, no isoform specificity has been reported. Signals downstream of phosphatidylinositol 3-kinase (PI(3)K) to mediate the effects of various growth factors such as platelet-derived growth factor (PDGF), epidermal growth factor (EGF), insulin and insulin-like growth factor 1 (IGF1). Plays a role as a key modulator of the AKT-mTOR signaling pathway controlling the tempo of the process of newborn neurons integration during adult neurogenesis, including correct neuron positioning, dendritic development and synapse formation. Plays a role in glucose transport by mediating insulin-induced translocation of the GLUT4 glucose transporter to the cell surface. Mediates the antiapoptotic effects of IGF1. Mediates insulin-stimulated protein synthesis, partly by playing a role in both insulin-induced phosphorylation of 4E-BP1 and in insulin-induced activation of p70 S6 kinase. Promotes glycogen synthesis by mediating the insulin-induced activation of glycogen synthase. Required for insulin-stimulated meiotic reinitiation during oocyte maturation. May be involved in the regulation of vesicular functions such as preciliary trafficking and endocytic recycling. The protein is RAC-alpha serine/threonine-protein kinase of Xenopus laevis (African clawed frog).